A 195-amino-acid polypeptide reads, in one-letter code: Probable DNA-directed RNA polymerase subunit delta (195 aa).

Positions 14 to 81 (LSMIEVAHAI…GDNTWGLRAW (68 aa)) constitute an HTH HARE-type domain. Residues 91–195 (TVGETEDEED…DEEDKEDDEE (105 aa)) form a disordered region. Composition is skewed to acidic residues over residues 116–171 (TDDD…EDQL) and 179–195 (FGDDEEEDEEDKEDDEE).

The protein belongs to the RpoE family. RNAP is composed of a core of 2 alpha, a beta and a beta' subunits. The core is associated with a delta subunit and one of several sigma factors.

Its function is as follows. Participates in both the initiation and recycling phases of transcription. In the presence of the delta subunit, RNAP displays an increased specificity of transcription, a decreased affinity for nucleic acids, and an increased efficiency of RNA synthesis because of enhanced recycling. The polypeptide is Probable DNA-directed RNA polymerase subunit delta (Limosilactobacillus fermentum (strain NBRC 3956 / LMG 18251) (Lactobacillus fermentum)).